A 357-amino-acid chain; its full sequence is Anthranilate phosphoribosyltransferase (357 aa).

Residues Gly91, 94 to 95 (GD), Thr99, 101 to 104 (NIST), 119 to 127 (KHGNRSVSS), and Ser131 each bind 5-phospho-alpha-D-ribose 1-diphosphate. Anthranilate is bound at residue Gly91. Ser103 serves as a coordination point for Mg(2+). Asn122 contacts anthranilate. Arg177 lines the anthranilate pocket. Residues Asp235 and Glu236 each coordinate Mg(2+).

The protein belongs to the anthranilate phosphoribosyltransferase family. Homodimer. Mg(2+) serves as cofactor.

It catalyses the reaction N-(5-phospho-beta-D-ribosyl)anthranilate + diphosphate = 5-phospho-alpha-D-ribose 1-diphosphate + anthranilate. It participates in amino-acid biosynthesis; L-tryptophan biosynthesis; L-tryptophan from chorismate: step 2/5. Its function is as follows. Catalyzes the transfer of the phosphoribosyl group of 5-phosphorylribose-1-pyrophosphate (PRPP) to anthranilate to yield N-(5'-phosphoribosyl)-anthranilate (PRA). This chain is Anthranilate phosphoribosyltransferase, found in Shewanella baltica (strain OS155 / ATCC BAA-1091).